Here is a 561-residue protein sequence, read N- to C-terminus: Putative transport protein KPK_3686 (561 aa).

Helical transmembrane passes span Leu8–Gly28, Leu37–Ile57, Phe66–Phe86, Met94–Phe114, and His158–Ala178. 2 consecutive RCK C-terminal domains span residues Leu202–Asn288 and Val292–Phe373. The next 5 membrane-spanning stretches (helical) occupy residues Leu383 to Phe403, Phe406 to Leu426, Phe447 to Gly467, Ala478 to Leu498, and Ala540 to Leu560.

It belongs to the AAE transporter (TC 2.A.81) family. YbjL subfamily.

The protein localises to the cell membrane. The protein is Putative transport protein KPK_3686 of Klebsiella pneumoniae (strain 342).